The sequence spans 180 residues: Stathmin-3 (180 aa).

One can recognise an SLD domain in the interval 38–180 (GDMEVKQLDK…NKEQREEISG (143 aa)). Residues 60 to 74 (SPSDLSPESPILSSP) are compositionally biased toward low complexity. The segment at 60–82 (SPSDLSPESPILSSPPKKKDLSL) is disordered. Residues 75–179 (PKKKDLSLEE…RNKEQREEIS (105 aa)) adopt a coiled-coil conformation.

This sequence belongs to the stathmin family.

The chain is Stathmin-3 (STMN3) from Gallus gallus (Chicken).